Here is a 469-residue protein sequence, read N- to C-terminus: Tryptophan biosynthesis protein TrpCF (469 aa).

The segment at 1-271 is indole-3-glycerol phosphate synthase; the sequence is MSEQLSEHIS…LAVRKIVLGE (271 aa). The segment at 272–469 is N-(5'-phosphoribosyl)anthranilate isomerase; sequence HKVCGLTHPD…QQVFQQLRNY (198 aa).

The protein in the N-terminal section; belongs to the TrpC family. It in the C-terminal section; belongs to the TrpF family. As to quaternary structure, monomer.

It carries out the reaction N-(5-phospho-beta-D-ribosyl)anthranilate = 1-(2-carboxyphenylamino)-1-deoxy-D-ribulose 5-phosphate. It catalyses the reaction 1-(2-carboxyphenylamino)-1-deoxy-D-ribulose 5-phosphate + H(+) = (1S,2R)-1-C-(indol-3-yl)glycerol 3-phosphate + CO2 + H2O. The protein operates within amino-acid biosynthesis; L-tryptophan biosynthesis; L-tryptophan from chorismate: step 3/5. It participates in amino-acid biosynthesis; L-tryptophan biosynthesis; L-tryptophan from chorismate: step 4/5. In terms of biological role, bifunctional enzyme that catalyzes two sequential steps of tryptophan biosynthetic pathway. The first reaction is catalyzed by the isomerase, coded by the TrpF domain; the second reaction is catalyzed by the synthase, coded by the TrpC domain. The chain is Tryptophan biosynthesis protein TrpCF (trpCF) from Vibrio cholerae serotype O1 (strain ATCC 39315 / El Tor Inaba N16961).